Consider the following 109-residue polypeptide: RYamide neuropeptides (109 aa).

The signal sequence occupies residues 1 to 22 (MNECVNKLLHLKFLFYFILGIQ). Tyrosine 33 carries the post-translational modification Tyrosine amide. Positions 36-53 (STTYDESLKSRRIFIVPR) are excised as a propeptide. Tyrosine 63 is modified (tyrosine amide). Positions 67-109 (SGKYLCLSREINKLIVRKRLRNNDKERTPTLSFITKHFLMRNT) are excised as a propeptide.

The protein resides in the secreted. In terms of biological role, neuropeptides RYamide-1 and RYamide-2 are ligands for the G-protein coupled receptor RYa-R. May suppress feeding behavior. The polypeptide is RYamide neuropeptides (Drosophila melanogaster (Fruit fly)).